The chain runs to 639 residues: Chaperone protein DnaK (639 aa).

T198 carries the post-translational modification Phosphothreonine; by autocatalysis. Positions 601–639 are disordered; it reads AQQAPGADSCGGDCGQQQEAGAKPKDEKVVDADFEEVKK. A compositionally biased stretch (basic and acidic residues) spans 622–639; sequence AKPKDEKVVDADFEEVKK.

Belongs to the heat shock protein 70 family.

Acts as a chaperone. In Trichlorobacter lovleyi (strain ATCC BAA-1151 / DSM 17278 / SZ) (Geobacter lovleyi), this protein is Chaperone protein DnaK.